Consider the following 125-residue polypeptide: Phosphoribosyl-AMP cyclohydrolase (125 aa).

Aspartate 91 is a Mg(2+) binding site. Cysteine 92 lines the Zn(2+) pocket. The Mg(2+) site is built by aspartate 93 and aspartate 95. The Zn(2+) site is built by cysteine 108 and cysteine 115.

Belongs to the PRA-CH family. As to quaternary structure, homodimer. It depends on Mg(2+) as a cofactor. The cofactor is Zn(2+).

Its subcellular location is the cytoplasm. It carries out the reaction 1-(5-phospho-beta-D-ribosyl)-5'-AMP + H2O = 1-(5-phospho-beta-D-ribosyl)-5-[(5-phospho-beta-D-ribosylamino)methylideneamino]imidazole-4-carboxamide. Its pathway is amino-acid biosynthesis; L-histidine biosynthesis; L-histidine from 5-phospho-alpha-D-ribose 1-diphosphate: step 3/9. Its function is as follows. Catalyzes the hydrolysis of the adenine ring of phosphoribosyl-AMP. The protein is Phosphoribosyl-AMP cyclohydrolase of Streptomyces griseus subsp. griseus (strain JCM 4626 / CBS 651.72 / NBRC 13350 / KCC S-0626 / ISP 5235).